Reading from the N-terminus, the 150-residue chain is Ribonuclease HI (150 aa).

The RNase H type-1 domain occupies 1–141 (MKLINAYTDG…VDVLARGQAM (141 aa)). Mg(2+)-binding residues include aspartate 9, glutamate 47, aspartate 69, and aspartate 133.

This sequence belongs to the RNase H family. Monomer. Mg(2+) is required as a cofactor.

The protein localises to the cytoplasm. It carries out the reaction Endonucleolytic cleavage to 5'-phosphomonoester.. In terms of biological role, endonuclease that specifically degrades the RNA of RNA-DNA hybrids. This Xylella fastidiosa (strain Temecula1 / ATCC 700964) protein is Ribonuclease HI.